The sequence spans 559 residues: Potassium-transporting ATPase potassium-binding subunit (559 aa).

13 helical membrane-spanning segments follow: residues 5 to 25 (GFLL…PLGS), 27 to 47 (LARL…RILW), 63 to 83 (LLAL…LLFW), 132 to 152 (GLTV…FALI), 170 to 190 (LVRI…LFFI), 253 to 273 (LAQM…FGEA), 283 to 303 (LLWA…WAEV), 327 to 347 (FGVL…CGAV), 356 to 376 (ALGG…FGGV), 379 to 399 (GLYG…LMIG), 416 to 436 (MTAL…ALAM), 484 to 504 (LLAF…MAIA), and 524 to 544 (GALF…LTFI).

It belongs to the KdpA family. The system is composed of three essential subunits: KdpA, KdpB and KdpC.

Its subcellular location is the cell inner membrane. Functionally, part of the high-affinity ATP-driven potassium transport (or Kdp) system, which catalyzes the hydrolysis of ATP coupled with the electrogenic transport of potassium into the cytoplasm. This subunit binds the periplasmic potassium ions and delivers the ions to the membrane domain of KdpB through an intramembrane tunnel. In Salmonella typhi, this protein is Potassium-transporting ATPase potassium-binding subunit.